The chain runs to 330 residues: Diacylglycerol acyltransferase/mycolyltransferase Ag85B (330 aa).

An N-terminal signal peptide occupies residues 1–40 (MTDLSEKVRAWGRRLLVGAAAAVTLPGLIGLAGGAATANA). Substrate is bound at residue 82–83 (LR). Residues 98-108 (FEWYYQSGLSV) are fibronectin-binding. An intrachain disulfide couples cysteine 127 to cysteine 132. Residues serine 166 and aspartate 194 each contribute to the substrate site. Serine 166 serves as the catalytic Nucleophile. The active site involves glutamate 270. Substrate contacts are provided by residues 272–275 (FVRS), lysine 279, and 302–304 (HSW). Residue histidine 302 is part of the active site.

Belongs to the mycobacterial A85 antigen family.

The protein resides in the secreted. It carries out the reaction 2 alpha,alpha'-trehalose 6-mycolate = alpha,alpha'-trehalose 6,6'-bismycolate + alpha,alpha-trehalose. The catalysed reaction is an acyl-CoA + a 1,2-diacyl-sn-glycerol = a triacyl-sn-glycerol + CoA. Functionally, the antigen 85 proteins (FbpA, FbpB, FbpC) are responsible for the high affinity of mycobacteria for fibronectin, a large adhesive glycoprotein, which facilitates the attachment of M.tuberculosis to murine alveolar macrophages (AMs). They also help to maintain the integrity of the cell wall by catalyzing the transfer of mycolic acids to cell wall arabinogalactan and through the synthesis of alpha,alpha-trehalose dimycolate (TDM, cord factor). They catalyze the transfer of a mycoloyl residue from one molecule of alpha,alpha-trehalose monomycolate (TMM) to another TMM, leading to the formation of TDM. The polypeptide is Diacylglycerol acyltransferase/mycolyltransferase Ag85B (fbpB) (Mycobacterium avium).